The primary structure comprises 198 residues: Dynein axonemal light chain 1 (198 aa).

LRR repeat units follow at residues 49–70, 71–92, 94–115, and 116–137; these read ACKHLALSTNNIEKISSLSGME, NLRILSLGRNLIKKIENLDAVA, TLEELWISYNQIASLSGIEKLV, and NLRVLYMSNNKITNWGEIDKLA. An LRRCT domain is found at 157–195; it reads KENNATSEYRIEVVKRLPNLKKLDGMPVDVDEREQANVA.

This sequence belongs to the dynein light chain LC1-type family. In terms of assembly, interacts with OCAD2, a outer arm dynein heavy chain. Interacts with tubulin (previously called p45) located within the A-tubule of the outer doublets in a ATP-independent manner.

The protein localises to the cytoplasm. The protein resides in the cytoskeleton. It localises to the flagellum axoneme. Functionally, part of the multisubunit axonemal ATPase complexes that generate the force for flagellar motility and govern beat frequency. Component of the outer arm dynein (ODA). May be involved in a mechanosensory feedback mechanism controlling ODA activity based on external conformational cues by tethering the outer arm dynein heavy chain (ODA2) to the A-tubule of the outer doublet microtubules within the axoneme. In Chlamydomonas reinhardtii (Chlamydomonas smithii), this protein is Dynein axonemal light chain 1.